A 207-amino-acid chain; its full sequence is N-(5'-phosphoribosyl)anthranilate isomerase (207 aa).

This sequence belongs to the TrpF family.

The catalysed reaction is N-(5-phospho-beta-D-ribosyl)anthranilate = 1-(2-carboxyphenylamino)-1-deoxy-D-ribulose 5-phosphate. It participates in amino-acid biosynthesis; L-tryptophan biosynthesis; L-tryptophan from chorismate: step 3/5. In Legionella pneumophila subsp. pneumophila (strain Philadelphia 1 / ATCC 33152 / DSM 7513), this protein is N-(5'-phosphoribosyl)anthranilate isomerase.